The chain runs to 930 residues: Isoleucine--tRNA ligase (930 aa).

The short motif at 57-67 is the 'HIGH' region element; the sequence is PYANGHLHLGH. Glutamate 555 serves as a coordination point for L-isoleucyl-5'-AMP. A 'KMSKS' region motif is present at residues 596–600; that stretch reads KMSKS. ATP is bound at residue lysine 599. Positions 896, 899, 916, and 919 each coordinate Zn(2+).

Belongs to the class-I aminoacyl-tRNA synthetase family. IleS type 1 subfamily. In terms of assembly, monomer. Zn(2+) serves as cofactor.

The protein localises to the cytoplasm. The enzyme catalyses tRNA(Ile) + L-isoleucine + ATP = L-isoleucyl-tRNA(Ile) + AMP + diphosphate. Functionally, catalyzes the attachment of isoleucine to tRNA(Ile). As IleRS can inadvertently accommodate and process structurally similar amino acids such as valine, to avoid such errors it has two additional distinct tRNA(Ile)-dependent editing activities. One activity is designated as 'pretransfer' editing and involves the hydrolysis of activated Val-AMP. The other activity is designated 'posttransfer' editing and involves deacylation of mischarged Val-tRNA(Ile). The chain is Isoleucine--tRNA ligase from Moorella thermoacetica (strain ATCC 39073 / JCM 9320).